A 1778-amino-acid polypeptide reads, in one-letter code: Internalin I (1778 aa).

A signal peptide spans 1 to 28 (MKKKFSIVIISVLLLGYLAPFDTLLVGA). The interval 36 to 101 (DTAVKTAEAD…NIKTEINTDK (66 aa)) is disordered. Positions 51 to 62 (IESETGSDDETA) are enriched in acidic residues. Basic and acidic residues predominate over residues 63–88 (EEPKEAKEAEASKETTEKEEKAKTEE). LRR repeat units follow at residues 155–179 (AISQ…EGLQ), 183–204 (NLTS…KDLV), 205–227 (NLVS…EDLV), 228–250 (NLQE…ASLP), 251–272 (VLKE…NPAG), 277–298 (ELET…AKLP), 299–321 (KLKN…NGAT), 322–344 (KLQL…SGLS), 345–367 (ELEM…KNLP), 368–389 (NLVN…NNLP), 390–412 (KLQT…TDLP), 413–434 (QLKT…DNLP), 435–456 (KLEK…TDLP), 457–478 (RLSY…KKLP), 479–500 (LLEW…TNFP), 501–522 (SLNY…TELP), 523–544 (SLKE…HDMP), 545–566 (NLRK…DNLP), 567–588 (KLQS…HDLP), 589–610 (SLET…DNLP), 611–632 (DLTY…GDLP), 633–653 (NLET…GTMD), 657–678 (KLRI…GNLS), 685–707 (NLTE…STLS), 708–729 (RLIY…SNLT), 730–751 (NLQE…SDLE), and 752–773 (NLNK…ANMV). Residues 785 to 872 (TYTLPTVLSY…SAAKVTADAE (88 aa)) enclose the LRRCT domain. MucBP domains follow at residues 1510–1569 (DAAA…EQTV), 1575–1634 (AIKP…PQTI), and 1644–1705 (SKKS…SQTV). Residues 1716 to 1742 (SKDDPKVKGKTNQPSSTDTKLKVDNNS) form a disordered region. A compositionally biased stretch (polar residues) spans 1725-1742 (KTNQPSSTDTKLKVDNNS). Residues 1743-1747 (LPATG) carry the LPXTG sorting signal motif. A Pentaglycyl murein peptidoglycan amidated threonine modification is found at T1746. Residues 1747–1778 (GDTENMILAVLIGFNMLIVASIFLFRKPKTNQ) constitute a propeptide, removed by sortase.

It belongs to the internalin family.

It localises to the secreted. The protein localises to the cell wall. Functionally, a role in virulence could not be demonstrated. The sequence is that of Internalin I (inlI) from Listeria monocytogenes serovar 1/2a (strain ATCC BAA-679 / EGD-e).